The sequence spans 705 residues: Ribosomal RNA large subunit methyltransferase K/L (705 aa).

Residues L43–L154 enclose the THUMP domain.

The protein belongs to the methyltransferase superfamily. RlmKL family.

Its subcellular location is the cytoplasm. The enzyme catalyses guanosine(2445) in 23S rRNA + S-adenosyl-L-methionine = N(2)-methylguanosine(2445) in 23S rRNA + S-adenosyl-L-homocysteine + H(+). It catalyses the reaction guanosine(2069) in 23S rRNA + S-adenosyl-L-methionine = N(2)-methylguanosine(2069) in 23S rRNA + S-adenosyl-L-homocysteine + H(+). Functionally, specifically methylates the guanine in position 2445 (m2G2445) and the guanine in position 2069 (m7G2069) of 23S rRNA. This Pectobacterium atrosepticum (strain SCRI 1043 / ATCC BAA-672) (Erwinia carotovora subsp. atroseptica) protein is Ribosomal RNA large subunit methyltransferase K/L.